The primary structure comprises 258 residues: Pimeloyl-[acyl-carrier protein] methyl ester esterase (258 aa).

The region spanning 16-242 (LVLLHGWGLN…AAHAPFISHP (227 aa)) is the AB hydrolase-1 domain. Substrate is bound by residues Trp22, 82–83 (SL), and 143–147 (FLALQ). The Nucleophile role is filled by Ser82. Residues Asp207 and His235 contribute to the active site. His235 lines the substrate pocket.

The protein belongs to the AB hydrolase superfamily. Carboxylesterase BioH family. Monomer.

Its subcellular location is the cytoplasm. The enzyme catalyses 6-carboxyhexanoyl-[ACP] methyl ester + H2O = 6-carboxyhexanoyl-[ACP] + methanol + H(+). It functions in the pathway cofactor biosynthesis; biotin biosynthesis. Functionally, the physiological role of BioH is to remove the methyl group introduced by BioC when the pimeloyl moiety is complete. It allows to synthesize pimeloyl-ACP via the fatty acid synthetic pathway through the hydrolysis of the ester bonds of pimeloyl-ACP esters. The sequence is that of Pimeloyl-[acyl-carrier protein] methyl ester esterase from Edwardsiella ictaluri (strain 93-146).